The chain runs to 100 residues: Phosphoribosylformylglycinamidine synthase subunit PurS (100 aa).

This sequence belongs to the PurS family. Homodimer. Part of the FGAM synthase complex composed of 1 PurL, 1 PurQ and 2 PurS subunits.

The protein resides in the cytoplasm. It catalyses the reaction N(2)-formyl-N(1)-(5-phospho-beta-D-ribosyl)glycinamide + L-glutamine + ATP + H2O = 2-formamido-N(1)-(5-O-phospho-beta-D-ribosyl)acetamidine + L-glutamate + ADP + phosphate + H(+). Its pathway is purine metabolism; IMP biosynthesis via de novo pathway; 5-amino-1-(5-phospho-D-ribosyl)imidazole from N(2)-formyl-N(1)-(5-phospho-D-ribosyl)glycinamide: step 1/2. In terms of biological role, part of the phosphoribosylformylglycinamidine synthase complex involved in the purines biosynthetic pathway. Catalyzes the ATP-dependent conversion of formylglycinamide ribonucleotide (FGAR) and glutamine to yield formylglycinamidine ribonucleotide (FGAM) and glutamate. The FGAM synthase complex is composed of three subunits. PurQ produces an ammonia molecule by converting glutamine to glutamate. PurL transfers the ammonia molecule to FGAR to form FGAM in an ATP-dependent manner. PurS interacts with PurQ and PurL and is thought to assist in the transfer of the ammonia molecule from PurQ to PurL. In Synechocystis sp. (strain ATCC 27184 / PCC 6803 / Kazusa), this protein is Phosphoribosylformylglycinamidine synthase subunit PurS.